The primary structure comprises 337 residues: S-adenosylmethionine:tRNA ribosyltransferase-isomerase (337 aa).

The protein belongs to the QueA family. Monomer.

It localises to the cytoplasm. The catalysed reaction is 7-aminomethyl-7-carbaguanosine(34) in tRNA + S-adenosyl-L-methionine = epoxyqueuosine(34) in tRNA + adenine + L-methionine + 2 H(+). The protein operates within tRNA modification; tRNA-queuosine biosynthesis. Its function is as follows. Transfers and isomerizes the ribose moiety from AdoMet to the 7-aminomethyl group of 7-deazaguanine (preQ1-tRNA) to give epoxyqueuosine (oQ-tRNA). This chain is S-adenosylmethionine:tRNA ribosyltransferase-isomerase, found in Legionella pneumophila (strain Paris).